Here is a 511-residue protein sequence, read N- to C-terminus: Tyrosine--tRNA ligase, chloroplastic/mitochondrial (511 aa).

Tyrosine 118 serves as a coordination point for L-tyrosine. Aspartate 122 provides a ligand contact to ATP. The short motif at 123 to 132 is the 'HIGH' region element; the sequence is PTAESLHLGN. L-tyrosine-binding residues include aspartate 162, tyrosine 256, glutamine 260, aspartate 263, and glutamine 282. Residues 318–322 carry the 'KMSKS' region motif; the sequence is KFGKS. Lysine 321 is a binding site for ATP. Positions 444 to 510 constitute an S4 RNA-binding domain; sequence LSIVDLSVSA…GKKNKVVVRI (67 aa).

This sequence belongs to the class-I aminoacyl-tRNA synthetase family.

It is found in the plastid. It localises to the chloroplast. Its subcellular location is the mitochondrion. It catalyses the reaction tRNA(Tyr) + L-tyrosine + ATP = L-tyrosyl-tRNA(Tyr) + AMP + diphosphate + H(+). Catalyzes the attachment of tyrosine to tRNA(Tyr) in a two-step reaction: tyrosine is first activated by ATP to form Tyr-AMP and then transferred to the acceptor end of tRNA(Tyr). The polypeptide is Tyrosine--tRNA ligase, chloroplastic/mitochondrial (Arabidopsis thaliana (Mouse-ear cress)).